A 430-amino-acid polypeptide reads, in one-letter code: Adenylosuccinate synthetase (430 aa).

Residues 12–18 (GDEGKGK) and 40–42 (GHT) each bind GTP. Residue D13 is the Proton acceptor of the active site. 2 residues coordinate Mg(2+): D13 and G40. IMP is bound by residues 13–16 (DEGK), 38–41 (NAGH), T130, R144, Q225, T240, and R304. Catalysis depends on H41, which acts as the Proton donor. 300–306 (STTGRPR) serves as a coordination point for substrate. GTP-binding positions include R306, 332 to 334 (KLD), and 414 to 416 (SVG).

This sequence belongs to the adenylosuccinate synthetase family. As to quaternary structure, homodimer. The cofactor is Mg(2+).

It is found in the cytoplasm. It catalyses the reaction IMP + L-aspartate + GTP = N(6)-(1,2-dicarboxyethyl)-AMP + GDP + phosphate + 2 H(+). It functions in the pathway purine metabolism; AMP biosynthesis via de novo pathway; AMP from IMP: step 1/2. Functionally, plays an important role in the de novo pathway of purine nucleotide biosynthesis. Catalyzes the first committed step in the biosynthesis of AMP from IMP. The sequence is that of Adenylosuccinate synthetase from Pelobacter propionicus (strain DSM 2379 / NBRC 103807 / OttBd1).